Consider the following 3078-residue polypeptide: Probable polyketide synthase 44 (3078 aa).

Residues 10–435 enclose the Ketosynthase family 3 (KS3) domain; that stretch reads DNDVAIIGIG…GSNACLILTE (426 aa). Catalysis depends on for beta-ketoacyl synthase activity residues Cys-175, His-320, and His-358. The segment at 627-660 is acyl/malonyl transferase; that stretch reads GILASISIGHSLGEVSSAVCSGMIDLETGCFIIY. The For acyl/malonyl transferase activity role is filled by Ser-637. Residues 952–1072 are N-terminal hotdog fold; the sequence is TNHLGYRNER…GRLSTTKHND (121 aa). Positions 952–1239 constitute a PKS/mFAS DH domain; it reads TNHLGYRNER…YTQLTPYKNQ (288 aa). His-984 serves as the catalytic Proton acceptor; for dehydratase activity. Positions 1088–1239 are C-terminal hotdog fold; the sequence is NFVTIQKKEL…YTQLTPYKNQ (152 aa). Asp-1150 acts as the Proton donor; for dehydratase activity in catalysis. Residues 2080 to 2119 adopt a coiled-coil conformation; that stretch reads LENIKTDLSNKNDNNNNNNNNNNDNKESNIKELLDNDDDE. The segment at 2087–2108 is disordered; sequence LSNKNDNNNNNNNNNNDNKESN. The span at 2090–2102 shows a compositional bias: low complexity; that stretch reads KNDNNNNNNNNNN. The Carrier domain maps to 2558-2636; it reads SDDLSIREQI…QLIQSVTDAM (79 aa). The residue at position 2596 (Ser-2596) is an O-(pantetheine 4'-phosphoryl)serine. The chain crosses the membrane as a helical span at residues 2694 to 2714; sequence NTVFLTGSSGFIGIYILFYLI.

Pantetheine 4'-phosphate is required as a cofactor.

The protein resides in the membrane. In terms of biological role, probable polyketide synthase. The protein is Probable polyketide synthase 44 (pks44) of Dictyostelium discoideum (Social amoeba).